A 181-amino-acid polypeptide reads, in one-letter code: MKIAVINGGTRSGGNTDVLAEKAVQGFDAEHIYLQKYPIQPIEDLRHAQGGFRPVQDDYDSIIERILQCHILIFATPIYWFGMSGTLKLFIDRWSQTLRDPRFPDFKQQMSVKQAYVIAVGGDNPKIKGLPLIQQFEHIFHFMGMSFKGYVLGEGNRPGDILRDHQALSAASRLLKRSDAI.

Belongs to the SsuE family. The cofactor is FMN.

In terms of biological role, putative NADPH-dependent oxidoreductase. In Bacillus subtilis (strain 168), this protein is Putative NAD(P)H-dependent FMN-containing oxidoreductase YwqN (ywqN).